The chain runs to 600 residues: 1,8-cineole synthase 1, chloroplastic (600 aa).

The transit peptide at M1–K31 directs the protein to the chloroplast. Dimethylallyl diphosphate is bound at residue D342. Mg(2+)-binding residues include D342 and D346. A DDXXD motif motif is present at residues D342–D346. Dimethylallyl diphosphate-binding residues include E420, R484, and N487. Mg(2+) contacts are provided by N487, T491, and E495.

This sequence belongs to the terpene synthase family. Tpsb subfamily. The cofactor is Mg(2+). Requires Mn(2+) as cofactor. In terms of tissue distribution, predominantly expressed in roots and at much lower levels in siliques. Not found in leaves, flowers or stems. Also detected in flowers in cv. Landsberg erecta. Not expressed in root apical meristem and elongation zone. Found in the vascular system of young roots and additionally in the cortex and epidermal cell layer of older roots.

It localises to the plastid. The protein resides in the chloroplast. It carries out the reaction (2E)-geranyl diphosphate + H2O = 1,8-cineole + diphosphate. It functions in the pathway secondary metabolite biosynthesis; terpenoid biosynthesis. Functionally, involved in monoterpene (C10) biosynthesis. The major product is 1,8-cineole (52%) followed by minor amounts of sabinene (14.5%), myrcene (13.3%), (-)-(1S)-beta-pinene (7.8%), (-)-(4S)-limonene (4.0%), (E)-beta-ocimene (2.7%), alpha-terpineol (2.4%), (-)-(1S)-alpha-pinene (1.9%), terpinolene (0.8%), and (+)-alpha-thujene (0.6%). The polypeptide is 1,8-cineole synthase 1, chloroplastic (TPS27) (Arabidopsis thaliana (Mouse-ear cress)).